The primary structure comprises 441 residues: MFS-type transporter (441 aa).

A disordered region spans residues methionine 1–isoleucine 47. 10 consecutive transmembrane segments (helical) span residues threonine 61 to phenylalanine 81, aspartate 95 to glycine 115, leucine 125 to threonine 145, leucine 150 to valine 170, leucine 183 to alanine 203, phenylalanine 212 to valine 232, phenylalanine 259 to alanine 279, threonine 289 to glycine 309, leucine 323 to valine 343, and valine 351 to isoleucine 371. N-linked (GlcNAc...) asparagine glycosylation is present at asparagine 388. The next 2 helical transmembrane spans lie at phenylalanine 389–alanine 409 and tyrosine 415–alanine 435.

This sequence belongs to the major facilitator superfamily. Monocarboxylate porter (TC 2.A.1.13) family.

The protein localises to the membrane. MFS-type transporter; part of the gene cluster that mediates the biosynthesis of butenolide, a mycotoxin that shows antibiotic activity but does not seem to play a major role in the spread of head blight in wheat. The sequence is that of MFS-type transporter from Gibberella zeae (strain ATCC MYA-4620 / CBS 123657 / FGSC 9075 / NRRL 31084 / PH-1) (Wheat head blight fungus).